The chain runs to 394 residues: Elongation factor Tu (394 aa).

The tr-type G domain occupies 10-204 (KPHINVGTIG…AMDNYIPIPE (195 aa)). The G1 stretch occupies residues 19-26 (GHVDHGKT). A GTP-binding site is contributed by 19 to 26 (GHVDHGKT). Position 26 (T26) interacts with Mg(2+). The G2 stretch occupies residues 60-64 (GITIN). A G3 region spans residues 81–84 (DCPG). Residues 81 to 85 (DCPGH) and 136 to 139 (NKVD) each bind GTP. A G4 region spans residues 136-139 (NKVD). Residues 174 to 176 (SAL) form a G5 region.

Belongs to the TRAFAC class translation factor GTPase superfamily. Classic translation factor GTPase family. EF-Tu/EF-1A subfamily. As to quaternary structure, monomer.

Its subcellular location is the cytoplasm. The catalysed reaction is GTP + H2O = GDP + phosphate + H(+). GTP hydrolase that promotes the GTP-dependent binding of aminoacyl-tRNA to the A-site of ribosomes during protein biosynthesis. The protein is Elongation factor Tu of Methylacidiphilum infernorum (isolate V4) (Methylokorus infernorum (strain V4)).